The primary structure comprises 506 residues: Maturase K (506 aa).

It belongs to the intron maturase 2 family. MatK subfamily.

It is found in the plastid. The protein resides in the chloroplast. Usually encoded in the trnK tRNA gene intron. Probably assists in splicing its own and other chloroplast group II introns. The chain is Maturase K from Trifolium striatum (Knotted clover).